The chain runs to 21 residues: ADPDPLQDFXVADLXDNAVXV.

This sequence belongs to the germin family. As to quaternary structure, homotetramer.

The protein localises to the secreted. Its subcellular location is the extracellular space. The protein resides in the apoplast. It is found in the cell wall. In terms of biological role, may subsume the role of germin at the low water potentials during embryogenesis. This is Pseudogermin from Triticum aestivum (Wheat).